Consider the following 742-residue polypeptide: MGNWLTGNWSSDRSSGYSSGWSPGGSSGVPSGPVHKLEKSIQANLTPNENCLKQIAVSSVPSQKLEGYIQENLKPNRESLKQIDQAVDAIWDLLRSQIPVKEVAKGGSYGRETALRGCSDGTLVLFMDCFQQFQDQIKYQDAYLDVIELWLKIHEKKSVKHEHALVVQVSVPGQRILLQLLPVFNPLRSNENPSSCVYVDLKKSMDQVRASPGEFSDCFTTLQQRFFKKYPQRLKDLILLVKHWYEQCQEKWKTPPPQPLLYALELLTVYAWEQGCQAEDFDMAQGVRTVLRLIQRPTELCVYWTVNYNFEDETVRNILLHQLRSQRPVILDPTDPTNNVGKDDGFWELLTEEAMAWLYSPSLNTESPAPYWDVLPMPLFVTPSHLLNKFIKDFLQPNKLFLKQIKEAVDIICSFLKNVCFLNSDTKVLKTVKGGSTAKGTALKRGSDADIVVFLSSLESYDSLKTNRSQFVQEIQKQLEEFVQAQEWEVTFEISKWKAPRVLSFTLKSKTLNESVEFDVLPAYDALGQLRSDFTLRPEAYKDLIELCASQDIKEGEFSICFTELQRNFIQTRPTKLKSLLRLIKHWYKQYERKMKPKASLPPKYALELLTVYAWEQGSGTDDFDIAEGFRTVLDLVIKYRQLCIFWTVNYNFEEEYMRKFLLTQIQKKRPVILDPADPTGDVGGGDRWCWHLLAEEAKEWLSSPCFQVEQKGLVQPWKVPVMQTPGSCGGQIYPTVGGVTK.

The interval 1–35 (MGNWLTGNWSSDRSSGYSSGWSPGGSSGVPSGPVH) is disordered. G2 is lipidated: N-myristoyl glycine. Positions 10–21 (SSDRSSGYSSGW) are enriched in low complexity. 2 OAS domain regions span residues 60–374 (VPSQ…YWDV) and 382–721 (TPSH…WKVP). N6-acetyllysine is present on K417. S436 lines the ATP pocket. Residues D448, D450, and D519 each coordinate Mg(2+). Positions 582 and 585 each coordinate ATP.

Belongs to the 2-5A synthase family. In terms of assembly, homodimer. The cofactor is Mg(2+). Myristoylation is not essential for its activity. Post-translationally, glycosylated. Glycosylation is essential for its activity. Expressed in the uterus. Expressed in mammary glands: expressed at low level before the establishment of lactation, then expression strongly increases, and subsequently decreases during early involution.

It localises to the cytoplasm. The protein resides in the perinuclear region. The catalysed reaction is 3 ATP = 5'-triphosphoadenylyl-(2'-&gt;5')-adenylyl-(2'-&gt;5')-adenosine + 2 diphosphate. Its activity is regulated as follows. Produced as a latent enzyme which is activated by double stranded RNA (dsRNA) generated during the course of viral infection. The dsRNA activator must be at least 15 nucleotides long, and no modification of the 2'-hydroxyl group is tolerated. ssRNA or dsDNA do not act as activators. Strongly inhibited by copper, iron and zinc ions. Partially inhibited by cobalt and nickel ions. Functionally, interferon-induced, dsRNA-activated antiviral enzyme which plays a critical role in cellular innate antiviral response. Activated by detection of double stranded RNA (dsRNA): polymerizes higher oligomers of 2'-5'-oligoadenylates (2-5A) from ATP which then bind to the inactive monomeric form of ribonuclease L (RNASEL) leading to its dimerization and subsequent activation. Activation of RNASEL leads to degradation of cellular as well as viral RNA, resulting in the inhibition of protein synthesis, thus terminating viral replication. Can mediate the antiviral effect via the classical RNASEL-dependent pathway or an alternative antiviral pathway independent of RNASEL. In addition, it may also play a role in other cellular processes such as apoptosis, cell growth, differentiation and gene regulation. May act as a negative regulator of lactation, stopping lactation in virally infected mammary gland lobules, thereby preventing transmission of viruses to neonates. Non-infected lobules would not be affected, allowing efficient pup feeding during infection. The polypeptide is 2'-5'-oligoadenylate synthase 2 (Mus musculus (Mouse)).